The primary structure comprises 387 residues: Succinate--CoA ligase [ADP-forming] subunit beta (387 aa).

The 236-residue stretch at lysine 9–leucine 244 folds into the ATP-grasp domain. ATP contacts are provided by residues lysine 46, glycine 53 to glycine 55, glycine 102, and glutamate 107. Mg(2+) contacts are provided by asparagine 199 and aspartate 213. Substrate contacts are provided by residues asparagine 264 and glycine 321–valine 323.

Belongs to the succinate/malate CoA ligase beta subunit family. As to quaternary structure, heterotetramer of two alpha and two beta subunits. Requires Mg(2+) as cofactor.

It carries out the reaction succinate + ATP + CoA = succinyl-CoA + ADP + phosphate. It catalyses the reaction GTP + succinate + CoA = succinyl-CoA + GDP + phosphate. The protein operates within carbohydrate metabolism; tricarboxylic acid cycle; succinate from succinyl-CoA (ligase route): step 1/1. Succinyl-CoA synthetase functions in the citric acid cycle (TCA), coupling the hydrolysis of succinyl-CoA to the synthesis of either ATP or GTP and thus represents the only step of substrate-level phosphorylation in the TCA. The beta subunit provides nucleotide specificity of the enzyme and binds the substrate succinate, while the binding sites for coenzyme A and phosphate are found in the alpha subunit. This chain is Succinate--CoA ligase [ADP-forming] subunit beta, found in Xylella fastidiosa (strain M23).